The sequence spans 202 residues: Cutinase (202 aa).

The signal sequence occupies residues 1-20; sequence MKTSAQQLLSALLLPLSVLA. Residues C31 and C106 are joined by a disulfide bond. The active-site Nucleophile is the S117. C165 and C172 form a disulfide bridge. D169 is a catalytic residue. H182 serves as the catalytic Proton donor/acceptor.

The protein belongs to the cutinase family. The 2 disulfide bonds play a critical role in holding the catalytic residues in juxta-position; reduction of the disulfide bridges results in the complete inactivation of the enzyme.

It localises to the secreted. It carries out the reaction cutin + H2O = cutin monomers.. In terms of biological role, catalyzes the hydrolysis of complex carboxylic polyesters found in the cell wall of plants. Degrades cutin, a macromolecule that forms the structure of the plant cuticle. Allows pathogenic fungi to penetrate through the cuticular barrier into the host plant during the initial stage of fungal infection. The sequence is that of Cutinase from Botryotinia fuckeliana (Noble rot fungus).